A 340-amino-acid polypeptide reads, in one-letter code: N-acetyl-gamma-glutamyl-phosphate reductase (340 aa).

Cysteine 149 is an active-site residue.

This sequence belongs to the NAGSA dehydrogenase family. Type 1 subfamily.

It localises to the cytoplasm. The enzyme catalyses N-acetyl-L-glutamate 5-semialdehyde + phosphate + NADP(+) = N-acetyl-L-glutamyl 5-phosphate + NADPH + H(+). Its pathway is amino-acid biosynthesis; L-arginine biosynthesis; N(2)-acetyl-L-ornithine from L-glutamate: step 3/4. Functionally, catalyzes the NADPH-dependent reduction of N-acetyl-5-glutamyl phosphate to yield N-acetyl-L-glutamate 5-semialdehyde. This Ruthia magnifica subsp. Calyptogena magnifica protein is N-acetyl-gamma-glutamyl-phosphate reductase.